Here is a 180-residue protein sequence, read N- to C-terminus: Large ribosomal subunit protein uL15 (180 aa).

Positions 1–62 (MKKERLEQAA…KTAGRGSKGQ (62 aa)) are disordered. The span at 35-44 (GAKKEKKRVG) shows a compositional bias: basic residues.

This sequence belongs to the universal ribosomal protein uL15 family. As to quaternary structure, part of the 50S ribosomal subunit.

In terms of biological role, binds to the 23S rRNA. This chain is Large ribosomal subunit protein uL15, found in Leptospira borgpetersenii serovar Hardjo-bovis (strain JB197).